Here is a 69-residue protein sequence, read N- to C-terminus: uncharacterized protein (69 aa).

The first 19 residues, 1–19 (MKRIWVSLMIAITACSAHA), serve as a signal peptide directing secretion.

This is an uncharacterized protein from Pasteurella multocida (strain Pm70).